We begin with the raw amino-acid sequence, 423 residues long: NADP-specific glutamate dehydrogenase (423 aa).

K112 is an active-site residue.

It belongs to the Glu/Leu/Phe/Val dehydrogenases family. Homohexamer.

The catalysed reaction is L-glutamate + NADP(+) + H2O = 2-oxoglutarate + NH4(+) + NADPH + H(+). This is NADP-specific glutamate dehydrogenase (gdhA) from Saccharolobus shibatae (strain ATCC 51178 / DSM 5389 / JCM 8931 / NBRC 15437 / B12) (Sulfolobus shibatae).